The sequence spans 377 residues: Glutamate 5-kinase (377 aa).

K20 contacts ATP. Substrate-binding residues include S60, D147, and N159. 179–180 (TD) contributes to the ATP binding site. The region spanning 285 to 363 (AGRLVIDAGA…DKVHQVLGEA (79 aa)) is the PUA domain.

It belongs to the glutamate 5-kinase family.

The protein localises to the cytoplasm. It carries out the reaction L-glutamate + ATP = L-glutamyl 5-phosphate + ADP. It functions in the pathway amino-acid biosynthesis; L-proline biosynthesis; L-glutamate 5-semialdehyde from L-glutamate: step 1/2. Its function is as follows. Catalyzes the transfer of a phosphate group to glutamate to form L-glutamate 5-phosphate. The polypeptide is Glutamate 5-kinase (Acinetobacter baylyi (strain ATCC 33305 / BD413 / ADP1)).